The chain runs to 149 residues: Myoglobin (149 aa).

Valine 2 carries the N-acetylvaline modification. Residues 2–143 form the Globin domain; that stretch reads VDWEKVNSVW…ICSDIEKEYK (142 aa). Histidine 89 lines the heme b pocket.

The protein belongs to the globin family. As to quaternary structure, monomeric.

Its subcellular location is the cytoplasm. The protein localises to the sarcoplasm. It carries out the reaction Fe(III)-heme b-[protein] + nitric oxide + H2O = Fe(II)-heme b-[protein] + nitrite + 2 H(+). It catalyses the reaction H2O2 + AH2 = A + 2 H2O. In terms of biological role, monomeric heme protein which primary function is to store oxygen and facilitate its diffusion within muscle tissues. Reversibly binds oxygen through a pentacoordinated heme iron and enables its timely and efficient release as needed during periods of heightened demand. Depending on the oxidative conditions of tissues and cells, and in addition to its ability to bind oxygen, it also has a nitrite reductase activity whereby it regulates the production of bioactive nitric oxide. Under stress conditions, like hypoxia and anoxia, it also protects cells against reactive oxygen species thanks to its pseudoperoxidase activity. This is Myoglobin (mb) from Mustelus antarcticus (Gummy shark).